Consider the following 757-residue polypeptide: Protein ALTERED SEED GERMINATION 2 (757 aa).

WD repeat units lie at residues 6–43, 48–87, 91–132, 145–185, 213–253, and 277–316; these read FHDG…LSQE, GHQG…LLHS, GHTA…GRAE, CHTR…SCPP, KQTL…PLAS, and RTNL…CSTG. The Nuclear localization signal motif lies at 245–257; sequence RRMLPPLASSRKR. One copy of the TPR repeat lies at 442–475; that stretch reads FKAHYYMSEALQQLGKCKEALDFATAAQHMNPSD. A disordered region spans residues 519–601; the sequence is ANSDSSHDMS…SSSQNDRTSY (83 aa). The span at 523-532 shows a compositional bias: basic and acidic residues; sequence SSHDMSRSER. Residues 533–543 show a composition bias toward acidic residues; it reads EDSDYDEELEL. Positions 582 to 601 are enriched in polar residues; that stretch reads TVDNASSGTASSSQNDRTSY. WD repeat units follow at residues 618 to 658 and 661 to 700; these read NVGT…LMKV and GDES…PSIV. Cysteine 754 carries S-12-hydroxyfarnesyl cysteine; by FTB/ERA1 lipidation.

In terms of assembly, interacts with DDB1; the subcellular localization of this complex depends on farnesylation status. Binds to HDA9 in the cytosol when farnesylated. Post-translationally, farnesylated at Cys-754 by FTB/ERA1; this modification triggers an exclusion from the nucleus.

The protein localises to the nucleus. It is found in the cytoplasm. It localises to the cytosol. It participates in protein modification; protein ubiquitination. Functionally, may function as a substrate adapter for CUL4-DDB1 E3 ubiquitin-protein ligase complex. Negative regulator of fatty acid biosynthetic process and accumulation. Acts as an abscisic acid (ABA) negative regulator. Involved in responses to salt (NaCl) and osmotic (e.g. in response to mannitol and PEG) stresses. This is Protein ALTERED SEED GERMINATION 2 from Arabidopsis thaliana (Mouse-ear cress).